The primary structure comprises 310 residues: Isoflavone reductase homolog A622-like (310 aa).

NADP(+)-binding positions include 13-19 (GGTGYIG), Arg38, and Lys47. Catalysis depends on Lys135, which acts as the Proton acceptor. Arg139 lines the NADP(+) pocket.

It belongs to the NmrA-type oxidoreductase family. Isoflavone reductase subfamily. As to quaternary structure, monomer. As to expression, expressed in roots.

It is found in the cytoplasm. The protein operates within alkaloid biosynthesis; nicotine biosynthesis. In terms of biological role, involved in the biosynthesis of pyridine alkaloid natural products, leading mainly to the production of anabasine, anatabine, nicotine and nornicotine, effective deterrents against herbivores with antiparasitic and pesticide properties (neurotoxins); nornicotine serves as the precursor in the synthesis of the carcinogen compound N'-nitrosonornicotine (NNN). Reductase that may be involved in a late step of tobacco alkaloid biosynthesis. Maybe involved in either the formation of a nicotinic acid-derived precursor or the final condensation reaction of tobacco alkaloids. This chain is Isoflavone reductase homolog A622-like, found in Nicotiana tabacum (Common tobacco).